Here is a 24-residue protein sequence, read N- to C-terminus: Alpha-lactalbumin (24 aa).

It belongs to the glycosyl hydrolase 22 family. Lactose synthase (LS) is a heterodimer of a catalytic component, beta1,4-galactosyltransferase (beta4Gal-T1) and a regulatory component, alpha-lactalbumin (LA). Glycosylated (50% of the proteins). Mammary gland specific. Secreted in milk.

It is found in the secreted. Functionally, regulatory subunit of lactose synthase, changes the substrate specificity of galactosyltransferase in the mammary gland making glucose a good acceptor substrate for this enzyme. This enables LS to synthesize lactose, the major carbohydrate component of milk. In other tissues, galactosyltransferase transfers galactose onto the N-acetylglucosamine of the oligosaccharide chains in glycoproteins. This is Alpha-lactalbumin (LALBA) from Felis catus (Cat).